We begin with the raw amino-acid sequence, 450 residues long: Protein indeterminate-domain 13 (450 aa).

Serine 54 is modified (phosphoserine). 2 consecutive C2H2-type zinc fingers follow at residues phenylalanine 64–histidine 86 and tyrosine 106–histidine 136. Residues isoleucine 128 to lysine 135 carry the Nuclear localization signal motif. The C2H2-type 2; degenerate zinc finger occupies tryptophan 141 to serine 165. Positions 143, 146, 159, 163, 170, 172, 185, and 189 each coordinate Zn(2+). The segment at phenylalanine 168–valine 191 adopts a CCHC-type 2; atypical zinc-finger fold. The tract at residues arginine 178–aspartate 190 is SHR-binding. Over residues phenylalanine 248–asparagine 263 the composition is skewed to polar residues. Residues phenylalanine 248–valine 280 form a disordered region.

Its subcellular location is the nucleus. Its function is as follows. Probable transcription factor. The protein is Protein indeterminate-domain 13 of Arabidopsis thaliana (Mouse-ear cress).